The primary structure comprises 230 residues: Ribonuclease 3 (230 aa).

An RNase III domain is found at 10 to 133 (DPRLQSRIGY…IIGAIYVDSN (124 aa)). Glu-46 contacts Mg(2+). The active site involves Asp-50. Mg(2+) contacts are provided by Asp-119 and Glu-122. Glu-122 is a catalytic residue. The DRBM domain occupies 161–230 (DPKSRLQEYL…AAEILKLLEQ (70 aa)).

The protein belongs to the ribonuclease III family. In terms of assembly, homodimer. The cofactor is Mg(2+).

Its subcellular location is the cytoplasm. It catalyses the reaction Endonucleolytic cleavage to 5'-phosphomonoester.. Its function is as follows. Digests double-stranded RNA. Involved in the processing of primary rRNA transcript to yield the immediate precursors to the large and small rRNAs (23S and 16S). Processes some mRNAs, and tRNAs when they are encoded in the rRNA operon. Processes pre-crRNA and tracrRNA of type II CRISPR loci if present in the organism. This chain is Ribonuclease 3, found in Acinetobacter baylyi (strain ATCC 33305 / BD413 / ADP1).